Consider the following 579-residue polypeptide: Potassium-transporting ATPase potassium-binding subunit (579 aa).

Transmembrane regions (helical) follow at residues 2-22, 66-86, 135-155, 177-197, 260-280, 292-312, 391-411, 437-457, 490-510, and 546-566; these read MNLV…AIPL, SFSV…LHIF, GLTV…FALI, VLYI…SQGV, TILS…ALCF, GIAI…IVGV, VFGG…LAVF, VLVC…ASIL, FAGF…SMIF, and FIGL…FPAL.

The protein belongs to the KdpA family. In terms of assembly, the system is composed of three essential subunits: KdpA, KdpB and KdpC.

The protein resides in the cell membrane. Part of the high-affinity ATP-driven potassium transport (or Kdp) system, which catalyzes the hydrolysis of ATP coupled with the electrogenic transport of potassium into the cytoplasm. This subunit binds the extracellular potassium ions and delivers the ions to the membrane domain of KdpB through an intramembrane tunnel. The sequence is that of Potassium-transporting ATPase potassium-binding subunit from Clostridium botulinum (strain Eklund 17B / Type B).